A 414-amino-acid chain; its full sequence is 2,3-diketo-5-methylthiopentyl-1-phosphate enolase (414 aa).

Residue Lys-99 is the Proton acceptor of the active site. Residues Lys-148, 174-177, His-265, Gly-338, and 360-361 contribute to the substrate site; these read KDDE and GG. Positions 174, 176, and 177 each coordinate Mg(2+). Lys-174 carries the N6-carboxylysine modification.

The protein belongs to the RuBisCO large chain family. Type IV subfamily. Homodimer. Mg(2+) is required as a cofactor.

The catalysed reaction is 5-methylsulfanyl-2,3-dioxopentyl phosphate = 2-hydroxy-5-methylsulfanyl-3-oxopent-1-enyl phosphate. The protein operates within amino-acid biosynthesis; L-methionine biosynthesis via salvage pathway; L-methionine from S-methyl-5-thio-alpha-D-ribose 1-phosphate: step 3/6. In terms of biological role, catalyzes the enolization of 2,3-diketo-5-methylthiopentyl-1-phosphate (DK-MTP-1-P) into 2-hydroxy-3-keto-5-methylthiopentenyl-1-phosphate (HK-MTPenyl-1-P). The polypeptide is 2,3-diketo-5-methylthiopentyl-1-phosphate enolase (Bacillus cereus (strain ATCC 10987 / NRS 248)).